A 364-amino-acid chain; its full sequence is Phosphoserine aminotransferase (364 aa).

An L-glutamate-binding site is contributed by Arg41. Pyridoxal 5'-phosphate-binding positions include 75 to 76, Trp100, Thr155, Asp175, and Gln198; that span reads AS. Lys199 carries the post-translational modification N6-(pyridoxal phosphate)lysine. Pyridoxal 5'-phosphate is bound at residue 239–240; the sequence is NT.

It belongs to the class-V pyridoxal-phosphate-dependent aminotransferase family. SerC subfamily. As to quaternary structure, homodimer. The cofactor is pyridoxal 5'-phosphate.

The protein resides in the cytoplasm. It catalyses the reaction O-phospho-L-serine + 2-oxoglutarate = 3-phosphooxypyruvate + L-glutamate. The catalysed reaction is 4-(phosphooxy)-L-threonine + 2-oxoglutarate = (R)-3-hydroxy-2-oxo-4-phosphooxybutanoate + L-glutamate. It functions in the pathway amino-acid biosynthesis; L-serine biosynthesis; L-serine from 3-phospho-D-glycerate: step 2/3. Catalyzes the reversible conversion of 3-phosphohydroxypyruvate to phosphoserine and of 3-hydroxy-2-oxo-4-phosphonooxybutanoate to phosphohydroxythreonine. The chain is Phosphoserine aminotransferase from Streptococcus thermophilus (strain CNRZ 1066).